The following is a 359-amino-acid chain: 3-dehydroquinate synthase (359 aa).

Residues 71–76 (DGEQYK), 105–109 (GVIGD), 129–130 (TT), Lys-142, Lys-151, and 169–172 (CLKT) each bind NAD(+). Residues Glu-184, His-247, and His-264 each contribute to the Zn(2+) site.

The protein belongs to the sugar phosphate cyclases superfamily. Dehydroquinate synthase family. The cofactor is Co(2+). Requires Zn(2+) as cofactor. NAD(+) is required as a cofactor.

It is found in the cytoplasm. It carries out the reaction 7-phospho-2-dehydro-3-deoxy-D-arabino-heptonate = 3-dehydroquinate + phosphate. It functions in the pathway metabolic intermediate biosynthesis; chorismate biosynthesis; chorismate from D-erythrose 4-phosphate and phosphoenolpyruvate: step 2/7. Functionally, catalyzes the conversion of 3-deoxy-D-arabino-heptulosonate 7-phosphate (DAHP) to dehydroquinate (DHQ). The chain is 3-dehydroquinate synthase from Shewanella amazonensis (strain ATCC BAA-1098 / SB2B).